The chain runs to 84 residues: Small ribosomal subunit protein uS17 (84 aa).

The protein belongs to the universal ribosomal protein uS17 family. As to quaternary structure, part of the 30S ribosomal subunit.

In terms of biological role, one of the primary rRNA binding proteins, it binds specifically to the 5'-end of 16S ribosomal RNA. The polypeptide is Small ribosomal subunit protein uS17 (Caldanaerobacter subterraneus subsp. tengcongensis (strain DSM 15242 / JCM 11007 / NBRC 100824 / MB4) (Thermoanaerobacter tengcongensis)).